Reading from the N-terminus, the 566-residue chain is Bifunctional NADP phosphatase/NAD kinase (566 aa).

Residues 1 to 283 (MDMLEMALNI…KLVGIFGNRW (283 aa)) form an NADP phosphatase region. Mg(2+)-binding residues include glutamate 66, aspartate 85, valine 87, aspartate 88, and aspartate 229. Residues 275 to 566 (LVGIFGNRWR…YNKLKKLSLM (292 aa)) form an NAD kinase region. Aspartate 355 serves as the catalytic Proton acceptor. Residues 355–356 (DG), arginine 360, 430–431 (NE), lysine 441, arginine 458, aspartate 460, 471–476 (TAYSLS), and asparagine 528 each bind NAD(+).

It in the N-terminal section; belongs to the inositol monophosphatase superfamily. The protein in the C-terminal section; belongs to the NAD kinase family. In terms of assembly, homotetramer. Requires Mg(2+) as cofactor.

The protein localises to the cytoplasm. It catalyses the reaction NAD(+) + ATP = ADP + NADP(+) + H(+). It carries out the reaction NADP(+) + H2O = phosphate + NAD(+). Functionally, involved in the regulation of the intracellular balance between NAD(H) and NADP(H), and is a key enzyme in the biosynthesis of NADP. Catalyzes the phosphorylation and dephosphorylation of NAD and NADP, respectively. Although it shows conflicting dual activities and is able to supply NADP, it seems that its physiological role is to prevent excess accumulation of NADP. The protein is Bifunctional NADP phosphatase/NAD kinase of Methanococcus maripaludis (strain DSM 14266 / JCM 13030 / NBRC 101832 / S2 / LL).